Reading from the N-terminus, the 77-residue chain is Sec-independent protein translocase protein TatA (77 aa).

A helical membrane pass occupies residues 1–21 (MGSFSIWHWLIVLVIVMLVFG). Residues 46–77 (GEGKAAADPAQSKELRDSTTIDVEAKEKTRQQ) are disordered.

It belongs to the TatA/E family. As to quaternary structure, the Tat system comprises two distinct complexes: a TatABC complex, containing multiple copies of TatA, TatB and TatC subunits, and a separate TatA complex, containing only TatA subunits. Substrates initially bind to the TatABC complex, which probably triggers association of the separate TatA complex to form the active translocon.

The protein resides in the cell inner membrane. In terms of biological role, part of the twin-arginine translocation (Tat) system that transports large folded proteins containing a characteristic twin-arginine motif in their signal peptide across membranes. TatA could form the protein-conducting channel of the Tat system. The polypeptide is Sec-independent protein translocase protein TatA (Cupriavidus necator (strain ATCC 17699 / DSM 428 / KCTC 22496 / NCIMB 10442 / H16 / Stanier 337) (Ralstonia eutropha)).